A 279-amino-acid chain; its full sequence is 3-methyl-2-oxobutanoate hydroxymethyltransferase (279 aa).

Residues Asp53 and Asp92 each contribute to the Mg(2+) site. 3-methyl-2-oxobutanoate-binding positions include 53–54, Asp92, and Lys122; that span reads DS. Glu124 contacts Mg(2+). Glu191 serves as the catalytic Proton acceptor.

It belongs to the PanB family. In terms of assembly, homodecamer; pentamer of dimers. Requires Mg(2+) as cofactor.

The protein resides in the cytoplasm. The catalysed reaction is 3-methyl-2-oxobutanoate + (6R)-5,10-methylene-5,6,7,8-tetrahydrofolate + H2O = 2-dehydropantoate + (6S)-5,6,7,8-tetrahydrofolate. Its pathway is cofactor biosynthesis; (R)-pantothenate biosynthesis; (R)-pantoate from 3-methyl-2-oxobutanoate: step 1/2. Functionally, catalyzes the reversible reaction in which hydroxymethyl group from 5,10-methylenetetrahydrofolate is transferred onto alpha-ketoisovalerate to form ketopantoate. The chain is 3-methyl-2-oxobutanoate hydroxymethyltransferase from Maricaulis maris (strain MCS10) (Caulobacter maris).